The chain runs to 307 residues: Protein phosphatase PTC7 homolog fig (307 aa).

The PPM-type phosphatase domain maps to Val-41–Val-300. Mn(2+) contacts are provided by Asp-77, Gly-78, and Asp-222.

This sequence belongs to the PP2C family. The cofactor is Mg(2+). Mn(2+) serves as cofactor.

The enzyme catalyses O-phospho-L-seryl-[protein] + H2O = L-seryl-[protein] + phosphate. It catalyses the reaction O-phospho-L-threonyl-[protein] + H2O = L-threonyl-[protein] + phosphate. This is Protein phosphatase PTC7 homolog fig from Drosophila grimshawi (Hawaiian fruit fly).